The following is a 275-amino-acid chain: NH(3)-dependent NAD(+) synthetase (275 aa).

50 to 57 (GISGGVDS) is an ATP binding site. A Mg(2+)-binding site is contributed by Asp56. Residue Arg147 coordinates deamido-NAD(+). Thr167 is a binding site for ATP. Residue Glu172 participates in Mg(2+) binding. Residues Lys180 and Asp187 each coordinate deamido-NAD(+). Residues Lys196 and Thr218 each contribute to the ATP site. 267–268 (HK) is a binding site for deamido-NAD(+).

The protein belongs to the NAD synthetase family. As to quaternary structure, homodimer.

It carries out the reaction deamido-NAD(+) + NH4(+) + ATP = AMP + diphosphate + NAD(+) + H(+). Its pathway is cofactor biosynthesis; NAD(+) biosynthesis; NAD(+) from deamido-NAD(+) (ammonia route): step 1/1. Its function is as follows. Catalyzes the ATP-dependent amidation of deamido-NAD to form NAD. Uses ammonia as a nitrogen source. The sequence is that of NH(3)-dependent NAD(+) synthetase from Pseudomonas syringae pv. syringae (strain B728a).